The primary structure comprises 82 residues: Putative membrane protein insertion efficiency factor (82 aa).

The protein belongs to the UPF0161 family.

It is found in the cell membrane. Its function is as follows. Could be involved in insertion of integral membrane proteins into the membrane. In Streptococcus thermophilus (strain ATCC BAA-491 / LMD-9), this protein is Putative membrane protein insertion efficiency factor.